The following is a 321-amino-acid chain: Peptide transport system permease protein SapB (321 aa).

Residues 1 to 8 lie on the Cytoplasmic side of the membrane; sequence MIIFTLRR. The helical transmembrane segment at 9–29 threads the bilayer; sequence LLLLLVTLFFLTFIGFSLSYF. Topologically, residues 30-80 are periplasmic; that stretch reads TPHAPLQGASLWNAWVFWFNGLLHWDFGVSSINGQLISEQLKEVFPATMEL. An ABC transmembrane type-1 domain is found at 74-302; the sequence is FPATMELCIL…SLVIVVNVIS (229 aa). A helical transmembrane segment spans residues 81-101; sequence CILAFGFALMVGIPVGMLAGV. Over 102 to 113 the chain is Cytoplasmic; that stretch reads TRSKWPDRFISA. A helical membrane pass occupies residues 114 to 134; sequence LALLGFSIPVFWLALLLTLFF. At 135–174 the chain is on the periplasmic side; it reads SLTLGWLPVSGRFDLLYEVKPVTGFAIIDAWISDSPWRDE. The chain crosses the membrane as a helical span at residues 175 to 195; the sequence is MVMSAIRHMVLPVLTLSVAPT. The Cytoplasmic segment spans residues 196–248; it reads TEVIRLMRISTIEVYDQNYVKAAATRGLSRFTILRRHVLHNALPPVIPRLGLQ. Residues 249 to 269 form a helical membrane-spanning segment; that stretch reads FSTMLTLAMITEMVFSWPGLG. Topologically, residues 270 to 280 are periplasmic; that stretch reads RWLIHAIRQQD. A helical membrane pass occupies residues 281 to 301; it reads YAAISAGVMVIGSLVIVVNVI. Residues 302 to 321 are Cytoplasmic-facing; it reads SDILGAMANPLKHKEWYALR.

Belongs to the binding-protein-dependent transport system permease family. OppBC subfamily.

It is found in the cell inner membrane. Functionally, involved in a peptide intake transport system that plays a role in the resistance to antimicrobial peptides. The polypeptide is Peptide transport system permease protein SapB (Salmonella typhimurium (strain LT2 / SGSC1412 / ATCC 700720)).